A 168-amino-acid chain; its full sequence is Phosphopantetheine adenylyltransferase (168 aa).

Thr-14 is a substrate binding site. ATP is bound by residues 14–15 and His-22; that span reads TF. Substrate contacts are provided by Lys-46, Leu-78, and Arg-92. ATP contacts are provided by residues 93–95, Glu-103, and 128–134; these read GLR and YSFISSS.

The protein belongs to the bacterial CoaD family. As to quaternary structure, homohexamer. Requires Mg(2+) as cofactor.

It is found in the cytoplasm. It carries out the reaction (R)-4'-phosphopantetheine + ATP + H(+) = 3'-dephospho-CoA + diphosphate. Its pathway is cofactor biosynthesis; coenzyme A biosynthesis; CoA from (R)-pantothenate: step 4/5. Reversibly transfers an adenylyl group from ATP to 4'-phosphopantetheine, yielding dephospho-CoA (dPCoA) and pyrophosphate. This chain is Phosphopantetheine adenylyltransferase, found in Xanthomonas euvesicatoria pv. vesicatoria (strain 85-10) (Xanthomonas campestris pv. vesicatoria).